The primary structure comprises 120 residues: Large ribosomal subunit protein uL18 (120 aa).

The protein belongs to the universal ribosomal protein uL18 family. As to quaternary structure, part of the 50S ribosomal subunit; part of the 5S rRNA/L5/L18/L25 subcomplex. Contacts the 5S and 23S rRNAs.

This is one of the proteins that bind and probably mediate the attachment of the 5S RNA into the large ribosomal subunit, where it forms part of the central protuberance. This chain is Large ribosomal subunit protein uL18, found in Staphylococcus haemolyticus (strain JCSC1435).